The chain runs to 213 residues: Glycerol-3-phosphate acyltransferase (213 aa).

Transmembrane regions (helical) follow at residues 2–22 (ITIVLLILAYLLGSIPSGLWI), 52–74 (AGMATFVIDFFKGTLATLLPIIF), 81–100 (PLIFGLLAVIGHTFPIFAGF), 112–132 (VIFGFAPIFCLYLAIIFFGAL), 143–163 (VTASIAAVIGVLLFPLFGFIL), and 164–184 (SNYDFLFIAIILALASLIIIR).

Belongs to the PlsY family. Probably interacts with PlsX.

The protein localises to the cell membrane. The catalysed reaction is an acyl phosphate + sn-glycerol 3-phosphate = a 1-acyl-sn-glycero-3-phosphate + phosphate. It functions in the pathway lipid metabolism; phospholipid metabolism. Catalyzes the transfer of an acyl group from acyl-phosphate (acyl-PO(4)) to glycerol-3-phosphate (G3P) to form lysophosphatidic acid (LPA). This enzyme utilizes acyl-phosphate as fatty acyl donor, but not acyl-CoA or acyl-ACP. This Streptococcus pneumoniae (strain CGSP14) protein is Glycerol-3-phosphate acyltransferase.